The following is a 1411-amino-acid chain: Protein ECM5 (1411 aa).

The JmjN domain occupies 118–159 (IPTFILAKKELPDPIKFYELVEDLGSVYGCVKLKIIPDADKF). The region spanning 185-279 (RTKIVDFYAK…ILLDFDIYEE (95 aa)) is the ARID domain. The tract at residues 285 to 312 (RNNEKNEDMVESEIFRHSNSRSRDEEEP) is disordered. In terms of domain architecture, JmjC spans 476–695 (KNILDQWNLD…FSSEAAKWTS (220 aa)). The PHD-type zinc-finger motif lies at 1238–1290 (TKYCFCRRVEEGTAMVECEICKEWYHVDCISNGELVPPDDPNVLFVCSICTPP).

It localises to the nucleus. In terms of biological role, may be involved in cell wall organization and biogenesis. In Saccharomyces cerevisiae (strain ATCC 204508 / S288c) (Baker's yeast), this protein is Protein ECM5 (ECM5).